Here is a 248-residue protein sequence, read N- to C-terminus: Trypsin II-P29 (248 aa).

Positions 1–16 are cleaved as a signal peptide; it reads MKFLFLILSCLGAAVA. Positions 17–25 are cleaved as a propeptide — activation peptide; it reads FPGGADDDK. Positions 26–246 constitute a Peptidase S1 domain; sequence IVGGYTCPEH…YVDWIQETIA (221 aa). 6 disulfides stabilise this stretch: Cys32–Cys162, Cys50–Cys66, Cys134–Cys235, Cys141–Cys208, Cys173–Cys187, and Cys198–Cys222. Catalysis depends on His65, which acts as the Charge relay system. Residues Glu77, Asn79, Val82, and Glu87 each contribute to the Ca(2+) site. The active-site Charge relay system is the Asp109. Catalysis depends on Ser202, which acts as the Charge relay system.

This sequence belongs to the peptidase S1 family. Ca(2+) is required as a cofactor. High levels are seen in the pancreas while lower levels are found in the liver, spleen and thymus.

Its subcellular location is the secreted. The protein resides in the extracellular space. The catalysed reaction is Preferential cleavage: Arg-|-Xaa, Lys-|-Xaa.. The chain is Trypsin II-P29 from Gallus gallus (Chicken).